Here is a 342-residue protein sequence, read N- to C-terminus: Dihydroorotate dehydrogenase (quinone) (342 aa).

Residues 60-64 (AGLDK) and Thr-84 each bind FMN. Lys-64 lines the substrate pocket. 109 to 113 (NRMGF) contributes to the substrate binding site. 2 residues coordinate FMN: Asn-137 and Asn-170. Residue Asn-170 coordinates substrate. Ser-173 acts as the Nucleophile in catalysis. Asn-175 is a substrate binding site. Residues Lys-215 and Thr-243 each contribute to the FMN site. Residue 244-245 (NT) participates in substrate binding. FMN contacts are provided by residues Gly-266, Gly-295, and 316–317 (YS).

This sequence belongs to the dihydroorotate dehydrogenase family. Type 2 subfamily. In terms of assembly, monomer. The cofactor is FMN.

The protein resides in the cell membrane. The catalysed reaction is (S)-dihydroorotate + a quinone = orotate + a quinol. The protein operates within pyrimidine metabolism; UMP biosynthesis via de novo pathway; orotate from (S)-dihydroorotate (quinone route): step 1/1. Functionally, catalyzes the conversion of dihydroorotate to orotate with quinone as electron acceptor. In Nitrosomonas eutropha (strain DSM 101675 / C91 / Nm57), this protein is Dihydroorotate dehydrogenase (quinone).